Consider the following 444-residue polypeptide: Presenilin sel-12 (444 aa).

The Cytoplasmic portion of the chain corresponds to 1–45 (MPSTRRQQEGGGADAETHTVYGTNLITNRNSQEDENVVEEAELKY). Residues 46–66 (GASHVIHLFVPVSLCMALVVF) traverse the membrane as a helical segment. Topologically, residues 67–101 (TMNTITFYSQNNGRHLLYTPFVRETDSIVEKGLMS) are lumenal. Residues 102-122 (LGNALVMLCVVVLMTVLLIVF) traverse the membrane as a helical segment. The Cytoplasmic segment spans residues 123-130 (YKYKFYKL). A helical membrane pass occupies residues 131-151 (IHGWLIVSSFLLLFLFTTIYV). Residues 152 to 163 (QEVLKSFDVSPS) are Lumenal-facing. Residues 164 to 184 (ALLVLFGLGNYGVLGMMCIHW) traverse the membrane as a helical segment. The Cytoplasmic segment spans residues 185-189 (KGPLR). The helical transmembrane segment at 190 to 210 (LQQFYLITMSALMALVFIKYL) threads the bilayer. Residues 211-212 (PE) lie on the Lumenal side of the membrane. Residues 213-233 (WTVWFVLFVISVWDLVAVLTP) traverse the membrane as a helical segment. The active site involves aspartate 226. The Cytoplasmic portion of the chain corresponds to 234–359 (KGPLRYLVET…RHEEEERGVK (126 aa)). The interval 275–331 (TDPREPTSSDSNTSTAFPGEASCSSETPKRPKVKRIPQKVQIESNTTASTTQNSGVR) is disordered. 2 stretches are compositionally biased toward polar residues: residues 282 to 300 (SSDS…CSSE) and 315 to 329 (QIES…QNSG). The helical transmembrane segment at 360–380 (LGLGDFIFYSVLLGKASSYFD) threads the bilayer. The active site involves aspartate 364. The Lumenal segment spans residues 381 to 384 (WNTT). A helical membrane pass occupies residues 385–405 (IACYVAILIGLCFTLVLLAVF). At 406–413 (KRALPALP) the chain is on the cytoplasmic side. Positions 410–412 (PAL) match the PAL motif. The segment at residues 414 to 434 (ISIFSGLIFYFCTRWIITPFV) is an intramembrane region (helical). Residues 435-444 (TQVSQKCLLY) are Cytoplasmic-facing.

It belongs to the peptidase A22A family. Homodimer. Component of the gamma-secretase complex, a complex probably composed of the presenilin homodimer (sel-12, hop-1 or spe-4), nicastrin (aph-2), aph-1 and pen-2. Interacts with sel-10. In terms of tissue distribution, expressed in most neurons.

Its subcellular location is the endoplasmic reticulum membrane. It localises to the golgi apparatus membrane. Probable catalytic subunit of the gamma-secretase complex, an endoprotease complex that catalyzes the intramembrane cleavage of integral membrane proteins such as Notch receptors (lin-12 or glp-1). Provides the major presenilin function compared to hop-1 and spe-4. Required cell-autonomously for correct neurite connectivity of the AIY cholinergic interneurons and their correct functioning in thermotaxis. Required for mesodermal patterning of muscle function. Promotes basement membrane gap formation during tissue remodeling. The sequence is that of Presenilin sel-12 from Caenorhabditis elegans.